The chain runs to 753 residues: Eukaryotic translation initiation factor 3 subunit B (753 aa).

The 88-residue stretch at 42-129 folds into the RRM domain; sequence TMLVVDNIPI…NVLHVNRFGD (88 aa). WD repeat units follow at residues 142-185, 203-241, 321-362, 537-580, and 595-640; these read DLPS…WWNG, NSKWGELYLQWSTMGTYLASLHRVGVALWSGPKLDGPIG, DTQS…LLDR, LDSK…DERR, and GEHY…LLHE. Positions 723–753 form a coiled coil; the sequence is KSKAKIDVKGQEARVEEWVEELIDETEELSM.

It belongs to the eIF-3 subunit B family. In terms of assembly, component of the eukaryotic translation initiation factor 3 (eIF-3) complex.

The protein localises to the cytoplasm. Its function is as follows. RNA-binding component of the eukaryotic translation initiation factor 3 (eIF-3) complex, which is involved in protein synthesis of a specialized repertoire of mRNAs and, together with other initiation factors, stimulates binding of mRNA and methionyl-tRNAi to the 40S ribosome. The eIF-3 complex specifically targets and initiates translation of a subset of mRNAs involved in cell proliferation. The polypeptide is Eukaryotic translation initiation factor 3 subunit B (Cryptococcus neoformans var. neoformans serotype D (strain B-3501A) (Filobasidiella neoformans)).